A 497-amino-acid polypeptide reads, in one-letter code: MTLSKYSKPTLNDPNLFRESGYIDGKWVKGTDEVFEVVDPASGEIIARVPEQPVSVVEEAIDVAYETFKTYKNTTPRERAKWLRNMYNLMLENLDDLATIITLENGKALGEAKGEIKYAASYFEWYAEEAPRLYGATIQPLNPHNRVFTIRQPVGVCGIICPWNFPSAMITRKAAAALAVGCTVVIKPDSQTPLSALAMAYLAEKAGFPKGSFNVILSHANTPKLGKTLCESPKVKKVTFTGSTNVGKILMKQSSSTLKKLSFELGGNAPFIVFEDADLDQALEQAMACKFRGLGQTCVCANRLYVHSSIIDKFAKLLAERVKKFVIGHGLDPKTTHGCVINSSAIEKVERHKQDAIDKGAKVVLEGGRLTELGPNFYAPVILSHVPSTAIVSKEETFGPLCPIFSFDTMEEVVGYANDTEFGLAAYVFSKNVNTLYTVSEALETGMVSCNTGVFSDCSIPFGGVKESGFGREGSLYGIEDYTVLKTITIGNLPNSI.

E264 functions as the Proton acceptor in the catalytic mechanism. The active-site Nucleophile is the C298.

This sequence belongs to the aldehyde dehydrogenase family. Homotetramer.

The protein resides in the cytoplasm. It catalyses the reaction succinate semialdehyde + NAD(+) + H2O = succinate + NADH + 2 H(+). It carries out the reaction succinate semialdehyde + NADP(+) + H2O = succinate + NADPH + 2 H(+). Its pathway is amino-acid degradation; 4-aminobutanoate degradation. With respect to regulation, inhibited by AMP, ADP anf ATP. Functionally, catalyzes the oxidation of succinate semialdehyde to succinate. Can utilize both NAD(+) or NADP(+) as a coenzyme, but has a 2.5-fold lower activity with NADP(+) than with NAD(+). Functions in a gamma-aminobutyrate (GABA) degradation pathway that allows growth utilizing GABA as a nitrogen source. Functions in the GABA shunt, which allows to bypass 2 reactions in the TCA cycle by removing alpha-ketoglutarate from the cycle and feeding succinate and NADH back into the cycle. This Saccharomyces cerevisiae (strain ATCC 204508 / S288c) (Baker's yeast) protein is Succinate-semialdehyde dehydrogenase [NADP(+)].